We begin with the raw amino-acid sequence, 420 residues long: Glutamate dehydrogenase (420 aa).

The active site involves lysine 105. Residue 220-226 (GYGNAGY) coordinates NAD(+).

It belongs to the Glu/Leu/Phe/Val dehydrogenases family. Homohexamer.

Its subcellular location is the cytoplasm. The catalysed reaction is L-glutamate + NAD(+) + H2O = 2-oxoglutarate + NH4(+) + NADH + H(+). The enzyme catalyses L-glutamate + NADP(+) + H2O = 2-oxoglutarate + NH4(+) + NADPH + H(+). This chain is Glutamate dehydrogenase (gdhA), found in Pyrococcus furiosus (strain ATCC 43587 / DSM 3638 / JCM 8422 / Vc1).